Consider the following 379-residue polypeptide: Chaperone protein DnaJ (379 aa).

One can recognise a J domain in the interval 5–70; sequence DYYEILGVSK…QKRAAYDQYG (66 aa). The CR-type zinc-finger motif lies at 134–212; the sequence is GVTKEIRIPT…CHGHGRVEKS (79 aa). 8 residues coordinate Zn(2+): Cys-147, Cys-150, Cys-164, Cys-167, Cys-186, Cys-189, Cys-200, and Cys-203. CXXCXGXG motif repeat units follow at residues 147–154, 164–171, 186–193, and 200–207; these read CDVCHGSG, CPTCHGSG, CPHCQGRG, and CHKCHGHG.

Belongs to the DnaJ family. Homodimer. Zn(2+) is required as a cofactor.

Its subcellular location is the cytoplasm. Its function is as follows. Participates actively in the response to hyperosmotic and heat shock by preventing the aggregation of stress-denatured proteins and by disaggregating proteins, also in an autonomous, DnaK-independent fashion. Unfolded proteins bind initially to DnaJ; upon interaction with the DnaJ-bound protein, DnaK hydrolyzes its bound ATP, resulting in the formation of a stable complex. GrpE releases ADP from DnaK; ATP binding to DnaK triggers the release of the substrate protein, thus completing the reaction cycle. Several rounds of ATP-dependent interactions between DnaJ, DnaK and GrpE are required for fully efficient folding. Also involved, together with DnaK and GrpE, in the DNA replication of plasmids through activation of initiation proteins. In Salmonella agona (strain SL483), this protein is Chaperone protein DnaJ.